The primary structure comprises 272 residues: Neurogenin-2 (272 aa).

The disordered stretch occupies residues 30 to 69; sequence LTPLSSSADEEEEEEPGASGGARRQRGAEAGQGARGGVAA. A bHLH domain is found at 112-164; the sequence is TRRLKANNRERNRMHNLNAALDALREVLPTFPEDAKLTKIETLRFAHNYIWAL. The segment covering 197-239 has biased composition (low complexity); it reads ASAALSSSGDSPSPASTWSCTNSPAPSSSVSSNSTSPYSCTLS. The tract at residues 197-264 is disordered; it reads ASAALSSSGD…PPDKHRYAPH (68 aa).

In terms of assembly, efficient DNA binding requires dimerization with another bHLH protein.

It localises to the nucleus. Functionally, transcriptional regulator. Involved in neuronal differentiation. Activates transcription by binding to the E box (5'-CANNTG-3'). This is Neurogenin-2 (NEUROG2) from Homo sapiens (Human).